A 25-amino-acid chain; its full sequence is uncharacterized protein (25 aa).

Its subcellular location is the plastid. It localises to the chloroplast. This is an uncharacterized protein from Trieres chinensis (Marine centric diatom).